Consider the following 110-residue polypeptide: Quaternary ammonium compound-resistance protein QacE (110 aa).

4 helical membrane passes run 1–21 (MKGW…TSAL), 30–50 (LAPS…LSLV), 58–78 (VAYA…AWLL), and 85–105 (AWGF…NLLS).

The protein belongs to the drug/metabolite transporter (DMT) superfamily. Small multidrug resistance (SMR) (TC 2.A.7.1) family.

The protein localises to the cell membrane. Functionally, multidrug exporter. Is implicated for the resistance to bacteriocidal quaternary ammonium compounds. The sequence is that of Quaternary ammonium compound-resistance protein QacE (qacE) from Escherichia coli.